Here is a 226-residue protein sequence, read N- to C-terminus: 6-deoxy-6-sulfo-D-fructose transaldolase (226 aa).

Catalysis depends on lysine 89, which acts as the Schiff-base intermediate with substrate.

The protein belongs to the transaldolase family.

The catalysed reaction is 6-deoxy-6-sulfo-D-fructose + D-glyceraldehyde 3-phosphate = D-fructose 6-phosphate + (2S)-3-sulfolactaldehyde. It carries out the reaction 6-deoxy-6-sulfo-D-fructose + D-erythrose 4-phosphate = (2S)-3-sulfolactaldehyde + D-sedoheptulose 7-phosphate. Its function is as follows. Part of the sulfo-TAL (or sulfo-SFT) pathway, a D-sulfoquinovose degradation pathway that produces sulfolactate (SL). Catalyzes the conversion of 6-deoxy-6-sulfo-D-fructose (SF) and glyceraldehyde 3-phosphate (GAP) into fructose-6-phosphate (F6P) and 3-sulfolactaldehyde (SLA). Can also catalyze the SF-cleavage with erythrose 4-phosphate (E4P) as acceptor, forming 3-sulfolactaldehyde (SLA) and sedoheptulose 7-phosphate (S7P). In Priestia aryabhattai (Bacillus aryabhattai), this protein is 6-deoxy-6-sulfo-D-fructose transaldolase.